We begin with the raw amino-acid sequence, 311 residues long: GTPase Era (311 aa).

The Era-type G domain occupies 18 to 185 (RSGFVALIGA…AKYLAESVPN (168 aa)). A G1 region spans residues 26–33 (GAPNAGKS). 26 to 33 (GAPNAGKS) provides a ligand contact to GTP. The segment at 52–56 (QTTRA) is G2. Residues 73 to 76 (DTPG) are G3. GTP is bound by residues 73–77 (DTPGI) and 135–138 (NKVD). A G4 region spans residues 135–138 (NKVD). Positions 164 to 166 (ISA) are G5. The region spanning 216 to 293 (LHEELPYAST…HLFLFVKVRE (78 aa)) is the KH type-2 domain.

The protein belongs to the TRAFAC class TrmE-Era-EngA-EngB-Septin-like GTPase superfamily. Era GTPase family. Monomer.

Its subcellular location is the cytoplasm. It is found in the cell inner membrane. Functionally, an essential GTPase that binds both GDP and GTP, with rapid nucleotide exchange. Plays a role in 16S rRNA processing and 30S ribosomal subunit biogenesis and possibly also in cell cycle regulation and energy metabolism. The protein is GTPase Era of Brucella suis biovar 1 (strain 1330).